An 836-amino-acid chain; its full sequence is Probable ribonuclease ZC3H12B (836 aa).

The segment at 1–92 (MTATAEVETP…SPCLDRPSFS (92 aa)) is disordered. Residues 8-28 (ETPKMEKSASKEEKQQPKQDS) show a composition bias toward basic and acidic residues. Acidic residues predominate over residues 35 to 46 (DSEEWMSSESDP). The segment covering 50-60 (SLKSSDNSKSC) has biased composition (polar residues). The span at 70 to 80 (KEMHSKPHRQL) shows a compositional bias: basic residues. One can recognise an RNase NYN domain in the interval 190-345 (LRPVVIDGSN…LGRHGPSLEN (156 aa)). The C3H1-type zinc finger occupies 355–380 (EHKKQPCPYGKKCTYGHKCKYYHPER).

It belongs to the ZC3H12 family. Mg(2+) is required as a cofactor.

In terms of biological role, may function as RNase and regulate the levels of target RNA species. The polypeptide is Probable ribonuclease ZC3H12B (ZC3H12B) (Homo sapiens (Human)).